Here is a 543-residue protein sequence, read N- to C-terminus: Chaperonin GroEL (543 aa).

Residues 29 to 32, 86 to 90, Gly413, 476 to 478, and Asp492 each bind ATP; these read TLGP, DGTTT, and NAA.

The protein belongs to the chaperonin (HSP60) family. As to quaternary structure, forms a cylinder of 14 subunits composed of two heptameric rings stacked back-to-back. Interacts with the co-chaperonin GroES.

The protein resides in the cytoplasm. The catalysed reaction is ATP + H2O + a folded polypeptide = ADP + phosphate + an unfolded polypeptide.. Its function is as follows. Together with its co-chaperonin GroES, plays an essential role in assisting protein folding. The GroEL-GroES system forms a nano-cage that allows encapsulation of the non-native substrate proteins and provides a physical environment optimized to promote and accelerate protein folding. This chain is Chaperonin GroEL, found in Streptococcus pyogenes serotype M18 (strain MGAS8232).